Reading from the N-terminus, the 289-residue chain is 1D-myo-inositol 2-acetamido-2-deoxy-alpha-D-glucopyranoside deacetylase 1 (289 aa).

Zn(2+) contacts are provided by histidine 4, aspartate 7, and histidine 140.

The protein belongs to the MshB deacetylase family. It depends on Zn(2+) as a cofactor.

The catalysed reaction is 1D-myo-inositol 2-acetamido-2-deoxy-alpha-D-glucopyranoside + H2O = 1D-myo-inositol 2-amino-2-deoxy-alpha-D-glucopyranoside + acetate. Functionally, catalyzes the deacetylation of 1D-myo-inositol 2-acetamido-2-deoxy-alpha-D-glucopyranoside (GlcNAc-Ins) in the mycothiol biosynthesis pathway. In Frankia alni (strain DSM 45986 / CECT 9034 / ACN14a), this protein is 1D-myo-inositol 2-acetamido-2-deoxy-alpha-D-glucopyranoside deacetylase 1.